The sequence spans 313 residues: MNSGFTHITVLLEEAVEALAVRADGCYLDGTFGRGGHSRLILNHLGPDGRLLGFDKDPQAIATGQALAAEDGRFVIVQRSFAELGSQAQELGLAGKVSGILLDLGVSSPQLDDPERGFSFMNDGPLDMRMDPTRGVSAAEFIASAPAEEIARVFKEYGEERFAKRMANAVVQRREIQPFERTADLAEVLKVANPAWEKGKNPATRAFQGLRIHVNNELGDLEAGLEAAMESLEVGGRLVVISFHSLEDRIVKLFMRKLAKGEADNMPRNLPIQYKAFEPKIKIHGKAQFASDVETKANPRSRSAVMRVAEKLR.

S-adenosyl-L-methionine contacts are provided by residues 35–37, aspartate 55, phenylalanine 81, aspartate 103, and glutamine 110; that span reads GGH.

Belongs to the methyltransferase superfamily. RsmH family.

The protein localises to the cytoplasm. It carries out the reaction cytidine(1402) in 16S rRNA + S-adenosyl-L-methionine = N(4)-methylcytidine(1402) in 16S rRNA + S-adenosyl-L-homocysteine + H(+). Specifically methylates the N4 position of cytidine in position 1402 (C1402) of 16S rRNA. The protein is Ribosomal RNA small subunit methyltransferase H of Pseudomonas syringae pv. tomato (strain ATCC BAA-871 / DC3000).